The chain runs to 1068 residues: Probable ATPase FE772_23070 (1068 aa).

Residue 217–224 coordinates ATP; sequence GGGGAGKT.

Its function is as follows. Involved in defense against bacteriophages. When this probable 4 gene operon (bGSDM-FE772_23060-FE772_23065-FE772_23070) is inserted into E.coli it provides nearly 100-fold protection against phages T5 and T6 and about 8-fold against phage T4. The operon without bGSDM no longer protects against phage. Probably a nucleotide hydrolase, possibly of ATP. This chain is Probable ATPase FE772_23070, found in Lysobacter enzymogenes.